A 208-amino-acid chain; its full sequence is FMN-dependent NADH:quinone oxidoreductase (208 aa).

FMN-binding positions include S17–S19, M99–L102, and S143–G146.

It belongs to the azoreductase type 1 family. Homodimer. It depends on FMN as a cofactor.

The enzyme catalyses 2 a quinone + NADH + H(+) = 2 a 1,4-benzosemiquinone + NAD(+). It catalyses the reaction N,N-dimethyl-1,4-phenylenediamine + anthranilate + 2 NAD(+) = 2-(4-dimethylaminophenyl)diazenylbenzoate + 2 NADH + 2 H(+). Its function is as follows. Quinone reductase that provides resistance to thiol-specific stress caused by electrophilic quinones. Functionally, also exhibits azoreductase activity. Catalyzes the reductive cleavage of the azo bond in aromatic azo compounds to the corresponding amines. The protein is FMN-dependent NADH:quinone oxidoreductase of Staphylococcus aureus (strain MRSA252).